The sequence spans 506 residues: ATP synthase subunit alpha (506 aa).

170–177 (GDRQTGKT) contributes to the ATP binding site.

Belongs to the ATPase alpha/beta chains family. In terms of assembly, F-type ATPases have 2 components, CF(1) - the catalytic core - and CF(0) - the membrane proton channel. CF(1) has five subunits: alpha(3), beta(3), gamma(1), delta(1), epsilon(1). CF(0) has four main subunits: a(1), b(1), b'(1) and c(9-12).

The protein resides in the cellular thylakoid membrane. It carries out the reaction ATP + H2O + 4 H(+)(in) = ADP + phosphate + 5 H(+)(out). Functionally, produces ATP from ADP in the presence of a proton gradient across the membrane. The alpha chain is a regulatory subunit. The chain is ATP synthase subunit alpha from Synechococcus sp. (strain JA-3-3Ab) (Cyanobacteria bacterium Yellowstone A-Prime).